A 240-amino-acid polypeptide reads, in one-letter code: UDP-2,3-diacylglucosamine hydrolase (240 aa).

Positions 8, 10, 41, 79, and 114 each coordinate Mn(2+). Position 79–80 (79–80 (NR)) interacts with substrate. Residues Asp122, Ser160, Asn164, Lys167, and His195 each coordinate substrate. The Mn(2+) site is built by His195 and His197.

It belongs to the LpxH family. It depends on Mn(2+) as a cofactor.

It localises to the cell inner membrane. It catalyses the reaction UDP-2-N,3-O-bis[(3R)-3-hydroxytetradecanoyl]-alpha-D-glucosamine + H2O = 2-N,3-O-bis[(3R)-3-hydroxytetradecanoyl]-alpha-D-glucosaminyl 1-phosphate + UMP + 2 H(+). Its pathway is glycolipid biosynthesis; lipid IV(A) biosynthesis; lipid IV(A) from (3R)-3-hydroxytetradecanoyl-[acyl-carrier-protein] and UDP-N-acetyl-alpha-D-glucosamine: step 4/6. Functionally, hydrolyzes the pyrophosphate bond of UDP-2,3-diacylglucosamine to yield 2,3-diacylglucosamine 1-phosphate (lipid X) and UMP by catalyzing the attack of water at the alpha-P atom. Involved in the biosynthesis of lipid A, a phosphorylated glycolipid that anchors the lipopolysaccharide to the outer membrane of the cell. This Salmonella typhi protein is UDP-2,3-diacylglucosamine hydrolase.